Reading from the N-terminus, the 315-residue chain is MTTVVKHFLRDDDLTPEQQAEVLELAARLKKAPFAERPLEGPRGVGVIFEKNSTRTRFSFEMGIAQLGGHAIVVDGRSTQLGREETLQDTGRVLSRYVDAVVWRTFGQKRLEAMASGADVPIVNALSDEFHPCQVLADLQTLAERKGSLKGLKLTYLGDGANNMAHSLMLGGVTAGVDVTIASPEGFAPLPWVVEAARARAADTGATITLTEDPQAAVVGADALVTDTWTSMGQENDGLDRVGPFRPFQINEALLAKAAADAVVLHCLPAHRGEEITDEVLDGPQSVVWDEAENRLHAQKALLVWLLAQRTGNRP.

Residues 53–56 (STRT), Gln80, Arg104, and 131–134 (HPCQ) contribute to the carbamoyl phosphate site. L-ornithine is bound by residues Asn163, Asp227, and 231-232 (SM). Carbamoyl phosphate contacts are provided by residues 267–268 (CL) and Arg295.

This sequence belongs to the aspartate/ornithine carbamoyltransferase superfamily. OTCase family.

Its subcellular location is the cytoplasm. The catalysed reaction is carbamoyl phosphate + L-ornithine = L-citrulline + phosphate + H(+). The protein operates within amino-acid degradation; L-arginine degradation via ADI pathway; carbamoyl phosphate from L-arginine: step 2/2. Its function is as follows. Reversibly catalyzes the transfer of the carbamoyl group from carbamoyl phosphate (CP) to the N(epsilon) atom of ornithine (ORN) to produce L-citrulline. The chain is Ornithine carbamoyltransferase from Rhodococcus opacus (strain B4).